The following is a 481-amino-acid chain: Protein nucleotidyltransferase YdiU (481 aa).

The ATP site is built by G85, G87, R88, K108, D120, G121, R171, and R178. The Proton acceptor role is filled by D248. Mg(2+)-binding residues include N249 and D258. Position 258 (D258) interacts with ATP. Residues 458–481 (HPGLAEFQQPPTPEQKGLQLSCSS) are disordered.

The protein belongs to the SELO family. Requires Mg(2+) as cofactor. Mn(2+) serves as cofactor.

The catalysed reaction is L-seryl-[protein] + ATP = 3-O-(5'-adenylyl)-L-seryl-[protein] + diphosphate. It carries out the reaction L-threonyl-[protein] + ATP = 3-O-(5'-adenylyl)-L-threonyl-[protein] + diphosphate. The enzyme catalyses L-tyrosyl-[protein] + ATP = O-(5'-adenylyl)-L-tyrosyl-[protein] + diphosphate. It catalyses the reaction L-histidyl-[protein] + UTP = N(tele)-(5'-uridylyl)-L-histidyl-[protein] + diphosphate. The catalysed reaction is L-seryl-[protein] + UTP = O-(5'-uridylyl)-L-seryl-[protein] + diphosphate. It carries out the reaction L-tyrosyl-[protein] + UTP = O-(5'-uridylyl)-L-tyrosyl-[protein] + diphosphate. Nucleotidyltransferase involved in the post-translational modification of proteins. It can catalyze the addition of adenosine monophosphate (AMP) or uridine monophosphate (UMP) to a protein, resulting in modifications known as AMPylation and UMPylation. This Hydrogenovibrio crunogenus (strain DSM 25203 / XCL-2) (Thiomicrospira crunogena) protein is Protein nucleotidyltransferase YdiU.